Here is a 512-residue protein sequence, read N- to C-terminus: Maturase K (512 aa).

This sequence belongs to the intron maturase 2 family. MatK subfamily.

It localises to the plastid. Its subcellular location is the chloroplast. In terms of biological role, usually encoded in the trnK tRNA gene intron. Probably assists in splicing its own and other chloroplast group II introns. The sequence is that of Maturase K from Dalea wrightii (Wright's prairie clover).